A 304-amino-acid polypeptide reads, in one-letter code: Putative S-adenosyl-L-methionine-dependent methyltransferase Mmcs_1043 (304 aa).

S-adenosyl-L-methionine-binding positions include aspartate 130 and aspartate 159–leucine 160.

The protein belongs to the UPF0677 family.

Its function is as follows. Exhibits S-adenosyl-L-methionine-dependent methyltransferase activity. This chain is Putative S-adenosyl-L-methionine-dependent methyltransferase Mmcs_1043, found in Mycobacterium sp. (strain MCS).